We begin with the raw amino-acid sequence, 410 residues long: Indoleamine 2,3-dioxygenase nanC (410 aa).

Residue histidine 309 participates in heme binding.

It belongs to the indoleamine 2,3-dioxygenase family. Heme is required as a cofactor.

The enzyme catalyses D-tryptophan + O2 = N-formyl-D-kynurenine. It catalyses the reaction L-tryptophan + O2 = N-formyl-L-kynurenine. It functions in the pathway secondary metabolite biosynthesis. In terms of biological role, indoleamine 2,3-dioxygenase; part of the gene cluster that mediates the biosynthesis of the benzazepine alkaloid nanangelenin A which contains an unprecedented 3,4-dihydro-1-benzazepine-2,5-dione-N-prenyl-N-acetoxy-anthranilamide scaffold. The first step of nanangelenin biosynthesis is catalyzed by the indoleamine 2,3-dioxygenase nanC which produces N-formyl-kynurenine through the catabolism of tryptophan. The two-module NRPS nanA then utilizes anthranilate (Ant) and L-kynurenine (L-Kyn) to assemble the dipeptide product nanangelenin B. The first adenylation domain of nanA (A1) loads anthranilate onto the T1 domain, while A2 loads kynurenine, generated through spontaneous nonenzymatic deformylation of the nanC-supplied N-formyl-kynurenine. The peptide bond formation between the tethered amino acids is catalyzed by the first condensation domain (C1) between anthranilate's carbonyl carbon and kynurenine's aliphatic primary amine. The second C domain (C2) catalyzes the final cyclization event between the aromatic amine of kynurenine and the tethered carbonyl carbon, yielding nanangelenin B. The terminal T3 domain enhances the catalytic efficiency of C2, suggesting the T2-tethered Ant-L-Kyn is transferred to T3 prior to cyclization by C2. Once released from nanA, nanangelenin B is then prenylated by the prenyltransferase nanD to form nanangelenin C. Nanangelenin C is then N-hydroxylated by the FAD-dependent monooxygenase nanF and further acetylated by the acetyltransferase nanB to yield nanangelenin F. Finally, the N-methyltransferase nanE methylates the amide nitrogen of 1-benzazepine to convert nanangelenin F into nanangelenin A. NanE is also able to methylate most of the intermediates of the pathway such as nanangelenin B and nanangelenin C to produce nanangelenin D and nanangelenin E, respectively. This is Indoleamine 2,3-dioxygenase nanC from Aspergillus nanangensis.